Consider the following 386-residue polypeptide: Na(+)/H(+) antiporter NhaA (386 aa).

The next 10 helical transmembrane spans lie at 10-30, 45-65, 84-104, 116-136, 142-162, 169-189, 261-281, 287-307, 323-343, and 358-378; these read EFSIPLLAGVLTALVWANVAP, LSFHFVTNDIFMAFFFAIAAV, LNPLLATAGGVVGPVGVYLAL, GWGIPTATDIAFAWLAARLIF, VIAFLLLLAIADDAIGLVIIA, VLPVAPPWLMLTAAGMLIAFI, IIVDFGLFMFGLANAGVGFSA, WLVFCALLFGKVTGIFVFALL, HLLVAGIIAGIGFTVALFVAG, and GAILSIAVFPVAMAAAKLLGI.

This sequence belongs to the NhaA Na(+)/H(+) (TC 2.A.33) antiporter family.

It localises to the cell inner membrane. It catalyses the reaction Na(+)(in) + 2 H(+)(out) = Na(+)(out) + 2 H(+)(in). Na(+)/H(+) antiporter that extrudes sodium in exchange for external protons. This is Na(+)/H(+) antiporter NhaA from Geotalea uraniireducens (strain Rf4) (Geobacter uraniireducens).